Here is a 275-residue protein sequence, read N- to C-terminus: Ribosomal RNA small subunit methyltransferase A (275 aa).

6 residues coordinate S-adenosyl-L-methionine: N19, L21, G46, E71, D94, and N117.

The protein belongs to the class I-like SAM-binding methyltransferase superfamily. rRNA adenine N(6)-methyltransferase family. RsmA subfamily.

It localises to the cytoplasm. It catalyses the reaction adenosine(1518)/adenosine(1519) in 16S rRNA + 4 S-adenosyl-L-methionine = N(6)-dimethyladenosine(1518)/N(6)-dimethyladenosine(1519) in 16S rRNA + 4 S-adenosyl-L-homocysteine + 4 H(+). In terms of biological role, specifically dimethylates two adjacent adenosines (A1518 and A1519) in the loop of a conserved hairpin near the 3'-end of 16S rRNA in the 30S particle. May play a critical role in biogenesis of 30S subunits. This is Ribosomal RNA small subunit methyltransferase A from Burkholderia lata (strain ATCC 17760 / DSM 23089 / LMG 22485 / NCIMB 9086 / R18194 / 383).